A 338-amino-acid polypeptide reads, in one-letter code: UDP-3-O-acylglucosamine N-acyltransferase (338 aa).

His-251 (proton acceptor) is an active-site residue.

The protein belongs to the transferase hexapeptide repeat family. LpxD subfamily. As to quaternary structure, homotrimer.

The catalysed reaction is a UDP-3-O-[(3R)-3-hydroxyacyl]-alpha-D-glucosamine + a (3R)-hydroxyacyl-[ACP] = a UDP-2-N,3-O-bis[(3R)-3-hydroxyacyl]-alpha-D-glucosamine + holo-[ACP] + H(+). Its pathway is bacterial outer membrane biogenesis; LPS lipid A biosynthesis. Catalyzes the N-acylation of UDP-3-O-acylglucosamine using 3-hydroxyacyl-ACP as the acyl donor. Is involved in the biosynthesis of lipid A, a phosphorylated glycolipid that anchors the lipopolysaccharide to the outer membrane of the cell. The polypeptide is UDP-3-O-acylglucosamine N-acyltransferase (Psychrobacter arcticus (strain DSM 17307 / VKM B-2377 / 273-4)).